We begin with the raw amino-acid sequence, 206 residues long: Ribosomal RNA small subunit methyltransferase G (206 aa).

S-adenosyl-L-methionine is bound by residues Gly-73, Leu-78, 124–125, and Arg-139; that span reads VE.

Belongs to the methyltransferase superfamily. RNA methyltransferase RsmG family.

It localises to the cytoplasm. The enzyme catalyses guanosine(527) in 16S rRNA + S-adenosyl-L-methionine = N(7)-methylguanosine(527) in 16S rRNA + S-adenosyl-L-homocysteine. Functionally, specifically methylates the N7 position of guanine in position 527 of 16S rRNA. The sequence is that of Ribosomal RNA small subunit methyltransferase G from Yersinia enterocolitica serotype O:8 / biotype 1B (strain NCTC 13174 / 8081).